A 959-amino-acid chain; its full sequence is Probable transport protein MmpL4 (959 aa).

11 consecutive transmembrane segments (helical) span residues 25-45 (FAVPIILVWLAIAVTVSVFIP), 205-225 (VIVILVTLLLVYRSFITVILL), 239-259 (VVALLGHTGLIGLSTFAVNLL), 300-320 (FHVILGSGLTISGATFCLSFA), 333-353 (AVGMLIAVAVALTLGPAVLTV), 381-401 (WPLPILITTCAIAMVGLLALP), 766-786 (WDLVIAGISSLCLIFIIMLII), 790-810 (FVAAAVIVGTVALSLGASFGL), 818-838 (ILGIELHYLVLAMSVIVLLAV), 872-892 (VVTNAGLVFAFTMASMVVSDL), and 902-922 (IGLGLLFDTLIVRSFMMPSIA).

This sequence belongs to the resistance-nodulation-cell division (RND) (TC 2.A.6) family. MmpL subfamily.

It is found in the cell membrane. In Mycobacterium leprae (strain TN), this protein is Probable transport protein MmpL4 (mmpL4).